The primary structure comprises 226 residues: Choline transport system permease protein OpuBD (226 aa).

Residues 22-202 enclose the ABC transmembrane type-1 domain; that stretch reads FGRHFLMSAY…VMAVGADLLM (181 aa). 5 helical membrane passes run 27–47, 52–72, 73–93, 148–168, and 182–202; these read LMSA…GILI, RLSA…ALAM, LAVL…SLFL, ALVI…GGLG, and AIIL…DLLM.

It belongs to the binding-protein-dependent transport system permease family. CysTW subfamily.

It is found in the cell membrane. Its function is as follows. Involved in a high affinity multicomponent binding-protein-dependent transport system for choline; probably responsible for the translocation of the substrate across the membrane. This chain is Choline transport system permease protein OpuBD (opuBD), found in Bacillus subtilis (strain 168).